Reading from the N-terminus, the 227-residue chain is 2,3-bisphosphoglycerate-dependent phosphoglycerate mutase (227 aa).

Substrate is bound by residues 7–14 (RHGLSEWN), 20–21 (TG), R59, 86–89 (ERHY), K97, 113–114 (RR), and 182–183 (GN). H8 acts as the Tele-phosphohistidine intermediate in catalysis. E86 acts as the Proton donor/acceptor in catalysis.

Belongs to the phosphoglycerate mutase family. BPG-dependent PGAM subfamily. In terms of assembly, homodimer.

It carries out the reaction (2R)-2-phosphoglycerate = (2R)-3-phosphoglycerate. It participates in carbohydrate degradation; glycolysis; pyruvate from D-glyceraldehyde 3-phosphate: step 3/5. Functionally, catalyzes the interconversion of 2-phosphoglycerate and 3-phosphoglycerate. The protein is 2,3-bisphosphoglycerate-dependent phosphoglycerate mutase of Actinobacillus succinogenes (strain ATCC 55618 / DSM 22257 / CCUG 43843 / 130Z).